Reading from the N-terminus, the 351-residue chain is Tropomodulin-2 (351 aa).

Ser25 carries the phosphoserine modification.

This sequence belongs to the tropomodulin family. As to quaternary structure, binds to the N-terminus of tropomyosin and to actin. As to expression, neuronal-tissue specific.

It is found in the cytoplasm. The protein resides in the cytoskeleton. Functionally, blocks the elongation and depolymerization of the actin filaments at the pointed end. The Tmod/TM complex contributes to the formation of the short actin protofilament, which in turn defines the geometry of the membrane skeleton. The protein is Tropomodulin-2 (TMOD2) of Homo sapiens (Human).